A 395-amino-acid polypeptide reads, in one-letter code: Acetate kinase 2 (395 aa).

N8 provides a ligand contact to Mg(2+). Position 15 (K15) interacts with ATP. R89 lines the substrate pocket. D146 functions as the Proton donor/acceptor in the catalytic mechanism. ATP contacts are provided by residues 206–210 (HIGNG), 283–285 (DMR), and 331–335 (GVGEN). E383 provides a ligand contact to Mg(2+).

Belongs to the acetokinase family. In terms of assembly, homodimer. Mg(2+) is required as a cofactor. The cofactor is Mn(2+).

It is found in the cytoplasm. The enzyme catalyses acetate + ATP = acetyl phosphate + ADP. It participates in metabolic intermediate biosynthesis; acetyl-CoA biosynthesis; acetyl-CoA from acetate: step 1/2. Functionally, catalyzes the formation of acetyl phosphate from acetate and ATP. Can also catalyze the reverse reaction. This is Acetate kinase 2 from Lactococcus lactis subsp. lactis (strain IL1403) (Streptococcus lactis).